The following is a 336-amino-acid chain: Glyceraldehyde-3-phosphate dehydrogenase (336 aa).

NAD(+) is bound by residues 12-13 (RI), D34, R78, and T121. Residues 151–153 (SCT), T182, R199, 212–213 (TG), and R235 each bind D-glyceraldehyde 3-phosphate. The active-site Nucleophile is C152. Position 316 (N316) interacts with NAD(+).

Belongs to the glyceraldehyde-3-phosphate dehydrogenase family. In terms of assembly, homotetramer.

It localises to the cytoplasm. The enzyme catalyses D-glyceraldehyde 3-phosphate + phosphate + NAD(+) = (2R)-3-phospho-glyceroyl phosphate + NADH + H(+). The protein operates within carbohydrate degradation; glycolysis; pyruvate from D-glyceraldehyde 3-phosphate: step 1/5. Also binds human plasminogen. Its function is as follows. Catalyzes the oxidative phosphorylation of glyceraldehyde 3-phosphate (G3P) to 1,3-bisphosphoglycerate (BPG) using the cofactor NAD. The first reaction step involves the formation of a hemiacetal intermediate between G3P and a cysteine residue, and this hemiacetal intermediate is then oxidized to a thioester, with concomitant reduction of NAD to NADH. The reduced NADH is then exchanged with the second NAD, and the thioester is attacked by a nucleophilic inorganic phosphate to produce BPG. This is Glyceraldehyde-3-phosphate dehydrogenase (gap) from Streptococcus pyogenes.